We begin with the raw amino-acid sequence, 71 residues long: Brevinin-1V (71 aa).

A signal peptide spans 1-22 (MFTLKKSLLLLFFLGTINLSLC). A propeptide spanning residues 23–45 (EQERDADEEERRDDSEERDIEVE) is cleaved from the precursor. Residues C65 and C71 are joined by a disulfide bond.

Belongs to the frog skin active peptide (FSAP) family. Brevinin subfamily. As to expression, expressed by the skin glands.

It is found in the secreted. Has antimicrobial activity against Gram-positive bacteria and fungi but has weak or no activity against a range of Gram-negative bacteria except P.faecalis. Active against the Gram-positive bacteria E.faecium 091299 (MIC=37.5 uM), S.aureus ATCC 25923 (MIC=2.4 uM), S.carnosus KHS (MIC=19 uM), B.licheniformis X39 (MIC=2.4 uM) and R.rhodochrous X15 (MIC=1.2 uM) and a lower activity against E.faecalis 981 (MIC=75 uM). Active against the Gram-negative bacterium P.faecalis X29 (MIC=9.5 uM) is virtually inactive against E.coli ATCC 25922 (MIC=150 uM), and inactive against P.aeruginosa and S.typhi. Has antifungal activity against C.albicans ATCC 2002 (MIC=9.5 uM) and is also active against the slime mold 090223 (MIC=1.2 uM). Has low hemolytic activity against human erythrocytes (LC(50)=75 uM). The chain is Brevinin-1V from Odorrana hainanensis (Odor frog).